The chain runs to 262 residues: Linker for activation of T-cells family member 1 (262 aa).

Residues 1–4 (MEEA) are Extracellular-facing. A helical; Signal-anchor for type III membrane protein membrane pass occupies residues 5–27 (ILVPCVLGLLLLPILAMLMALCV). 2 S-palmitoyl cysteine lipidation sites follow: Cys26 and Cys29. The Cytoplasmic segment spans residues 28-262 (HCHRLPGSYD…PDYENLQELN (235 aa)). Residue Thr39 is modified to Phosphothreonine. A phosphoserine mark is found at Ser40, Ser41, Ser43, Ser84, Ser101, Ser106, and Ser109. The tract at residues 69 to 115 (SYPPLSQPDLLPIPRSPQPLGGSHRTPSSRRDSDGANSVASYENEGA) is disordered. Phosphotyrosine occurs at positions 110, 156, 161, 200, and 220. The interval 161-164 (YLVV) is interaction with PLCG1. Interaction with GRB2, GRAP2 and PIK3R1 regions lie at residues 200–203 (YVNV) and 220–223 (YVNV). The tract at residues 206–262 (SGESAEASLDGSREYVNVSQELHPGAAKTEPAALSSQEAEEVEEEGAPDYENLQELN) is disordered. A phosphoserine mark is found at Ser224, Ser240, and Ser241. A compositionally biased stretch (acidic residues) spans 243–253 (EAEEVEEEGAP). Tyr255 is modified (phosphotyrosine).

In terms of assembly, when phosphorylated, interacts directly with the PIK3R1 subunit of phosphoinositide 3-kinase and the SH2 domains of GRB2, GRAP, GRAP2, PLCG1 and PLCG2. Interacts indirectly with CBL, SOS, VAV, and LCP2. Interacts with SHB, SKAP2 and CLNK. Interacts with FCGR1A. Interacts with GRB2, PLCG1 and THEMIS upon TCR activation in thymocytes. Interacts with THEMIS2. As to quaternary structure, (Microbial infection) Interacts with herpes virus 1/HHV-1 protein US3; this interaction prevents the interaction between LAT and TRAF6. Phosphorylated on tyrosines by ZAP70 upon TCR activation, or by SYK upon other immunoreceptor activation; which leads to the recruitment of multiple signaling molecules. Is one of the most prominently tyrosine-phosphorylated proteins detected following TCR engagement. May be dephosphorylated by PTPRJ. Phosphorylated by ITK leading to the recruitment of VAV1 to LAT-containing complexes. In terms of processing, palmitoylation of Cys-26 and Cys-29 is required for raft targeting and efficient phosphorylation. Post-translationally, 'Lys-63'-linked ubiquitinated by TRAF6. Expressed in thymus, T-cells, NK cells, mast cells and, at lower levels, in spleen. Present in T-cells but not B-cells (at protein level).

The protein localises to the cell membrane. Functionally, required for TCR (T-cell antigen receptor)- and pre-TCR-mediated signaling, both in mature T-cells and during their development. Involved in FCGR3 (low affinity immunoglobulin gamma Fc region receptor III)-mediated signaling in natural killer cells and FCER1 (high affinity immunoglobulin epsilon receptor)-mediated signaling in mast cells. Couples activation of these receptors and their associated kinases with distal intracellular events such as mobilization of intracellular calcium stores, PKC activation, MAPK activation or cytoskeletal reorganization through the recruitment of PLCG1, GRB2, GRAP2, and other signaling molecules. This is Linker for activation of T-cells family member 1 (LAT) from Homo sapiens (Human).